The sequence spans 210 residues: Acetoin utilization protein AcuA (210 aa).

The 142-residue stretch at 20 to 161 (LIEGPVSPED…YRKIMEKMMN (142 aa)) folds into the N-acetyltransferase domain.

It belongs to the acetyltransferase family. In terms of assembly, monomer.

The protein operates within ketone degradation; acetoin degradation. With respect to regulation, activity is sensitive to salt concentration, a high concentration of KCL (500 mM) is needed for complete inactivation. Functionally, part of the acuABC operon, which is possibly involved in the breakdown of acetoin and butanediol. Acts as an acetyltransferase inactivating acetyl-CoA synthetase AcsA via acetylation at a Lys residue. The chain is Acetoin utilization protein AcuA (acuA) from Bacillus subtilis (strain 168).